Reading from the N-terminus, the 138-residue chain is Outer membrane protein assembly factor BamE (138 aa).

A signal peptide spans 1-42 (MSHLTMIKTLNLRPFHSASALRKIVITSILGVAVTMSGCSLL).

This sequence belongs to the BamE family. As to quaternary structure, part of the Bam complex.

It localises to the cell outer membrane. In terms of biological role, part of the outer membrane protein assembly complex, which is involved in assembly and insertion of beta-barrel proteins into the outer membrane. The chain is Outer membrane protein assembly factor BamE from Psychrobacter arcticus (strain DSM 17307 / VKM B-2377 / 273-4).